The primary structure comprises 20 residues: 21 kDa cold shock-induced protein (20 aa).

The segment covering 1-12 has biased composition (basic and acidic residues); sequence TDSIKETIKETV. The segment at 1 to 20 is disordered; that stretch reads TDSIKETIKETVNHQAEWPY.

This is 21 kDa cold shock-induced protein from Streptococcus thermophilus.